The following is a 29-amino-acid chain: Cytolysin Uc-1 (29 aa).

Polar residues predominate over residues 1–15; the sequence is DEQTGSKGPNENLPS. A disordered region spans residues 1–29; sequence DEQTGSKGPNENLPSQKDLXAKASXLTEV.

The protein localises to the secreted. It localises to the nematocyst. Its subcellular location is the target cell membrane. Its function is as follows. Pore-forming toxin that lyses bovine erythrocytes at nanomolar concentrations. Is devoid of enzymatic activity. Binds to monolayers and efficiently permeabilizes small lipid vesicles composed of sphingomyelin and cholesterol. The cytolytic activity is not prevented by cholesterol or sphingomyelin. This Urticina crassicornis (Mottled anemone) protein is Cytolysin Uc-1.